We begin with the raw amino-acid sequence, 297 residues long: Transcription factor PCF8 (297 aa).

Positions Met1–Gly22 are disordered. Positions Gly46 to Leu104 constitute a TCP domain. Disordered regions lie at residues Ala116–Ser136 and Ala273–Thr297. Over residues Gly282 to Thr297 the composition is skewed to basic and acidic residues.

Forms homodimers and heterodimers.

The protein resides in the nucleus. Its function is as follows. Transcription activator. Binds the promoter core sequence 5'-GGNCC-3'. This Oryza sativa subsp. indica (Rice) protein is Transcription factor PCF8 (PCF8).